The sequence spans 439 residues: GTPase Der (439 aa).

EngA-type G domains lie at 4–168 (PIVA…KDDE) and 177–352 (INIA…DNYT). GTP contacts are provided by residues 10–17 (GRPNVGKS), 57–61 (DTGGI), 120–123 (NKID), 183–190 (GKPNVGKS), 230–234 (DTAGL), and 295–298 (NKWD). Residues 353–437 (KRVKTGVLND…GIKLEFRERK (85 aa)) enclose the KH-like domain.

The protein belongs to the TRAFAC class TrmE-Era-EngA-EngB-Septin-like GTPase superfamily. EngA (Der) GTPase family. Associates with the 50S ribosomal subunit.

GTPase that plays an essential role in the late steps of ribosome biogenesis. This chain is GTPase Der, found in Clostridium botulinum (strain Kyoto / Type A2).